Reading from the N-terminus, the 827-residue chain is Leucine--tRNA ligase (827 aa).

A 'HIGH' region motif is present at residues 42 to 52 (PYPSGKLHMGH). The short motif at 583–587 (KMSKS) is the 'KMSKS' region element. K586 serves as a coordination point for ATP.

This sequence belongs to the class-I aminoacyl-tRNA synthetase family.

The protein localises to the cytoplasm. The enzyme catalyses tRNA(Leu) + L-leucine + ATP = L-leucyl-tRNA(Leu) + AMP + diphosphate. This Pelotomaculum thermopropionicum (strain DSM 13744 / JCM 10971 / SI) protein is Leucine--tRNA ligase.